Consider the following 1476-residue polypeptide: ABC-type transporter frbG (1476 aa).

Helical transmembrane passes span 26-46 (LLFE…VLAL), 64-84 (LYYA…VQLI), 97-117 (SIAI…LCHL), 122-142 (SAKP…FDII), and 146-166 (TLWI…GLVL). Asn-244 is a glycosylation site (N-linked (GlcNAc...) asparagine). The next 4 membrane-spanning stretches (helical) occupy residues 266–286 (FLAG…QPFL), 302–322 (AGAT…GIAI), 380–400 (LQTM…TWLL), and 409–429 (IPSV…AVMA). The 280-residue stretch at 274–553 (LALTGFTFAQ…FVHSAVNLML (280 aa)) folds into the ABC transmembrane type-1 1 domain. N-linked (GlcNAc...) asparagine glycosylation occurs at Asn-464. 2 helical membrane-spanning segments follow: residues 487–507 (CLVF…IIGF) and 533–553 (IFAL…NLML). An ABC transporter 1 domain is found at 619–845 (IQARDTNIGW…VTAHVHNQTS (227 aa)). 652–659 (GPTNSGKS) lines the ATP pocket. Asn-694, Asn-776, Asn-805, and Asn-842 each carry an N-linked (GlcNAc...) asparagine glycan. The next 5 helical transmembrane spans lie at 898–918 (AVFL…SIWV), 936–956 (YLLV…GGGS), 1017–1037 (LFAF…SPFV), 1121–1141 (LGLV…IVIV), and 1151–1171 (GFLG…GGFI). The region spanning 898–1179 (AVFLALCMAL…FIGGWTGLET (282 aa)) is the ABC transmembrane type-1 2 domain. Residues 1216 to 1447 (IVFDDVTASY…LSSSSPTSSP (232 aa)) form the ABC transporter 2 domain. N-linked (GlcNAc...) asparagine glycosylation is present at Asn-1235. An ATP-binding site is contributed by 1250-1257 (GRTGSGKS).

The protein belongs to the ABC transporter superfamily. ABCC family. Conjugate transporter (TC 3.A.1.208) subfamily.

It localises to the cell membrane. Its function is as follows. ABC-type transporter; part of the gene cluster that mediates the biosynthesis of the antifungal antibiotic FR901469, an inhibitor of beta-1,3-glucansynthase, exerting antifungal activity against the pathogenes Candida albicans and Aspergillus fumigatus. FR901469 is a cyclic depsipeptide containing 12 amino acid residues and a fatty acid chain. Probably involved in the secretion of FR901469. This is ABC-type transporter frbG from Dothideomycetidae sp. (strain 11243) (Fungal sp. (strain No.11243)).